A 153-amino-acid polypeptide reads, in one-letter code: Small ribosomal subunit protein bS16 (153 aa).

Over residues A121–A131 the composition is skewed to basic and acidic residues. The disordered stretch occupies residues A121–D153. The segment covering A140 to D153 has biased composition (acidic residues).

Belongs to the bacterial ribosomal protein bS16 family.

The protein is Small ribosomal subunit protein bS16 of Bifidobacterium longum (strain DJO10A).